A 288-amino-acid polypeptide reads, in one-letter code: PAK4-inhibitor inka2 (288 aa).

Positions 159-196 are inka box; that stretch reads DPTDWTTSLLTRGRNRQPLVLGDNSFADLIKNWMDLPE.

Belongs to the INKA family.

It localises to the nucleus. Inhibitor of the serine/threonine-protein kinase pak4/pak5. Acts by binding pak4/pak5 in a substrate-like manner, inhibiting the protein kinase activity. This is PAK4-inhibitor inka2 from Danio rerio (Zebrafish).